A 472-amino-acid chain; its full sequence is ATP synthase subunit beta (472 aa).

Position 155-162 (155-162 (GGAGVGKT)) interacts with ATP.

The protein belongs to the ATPase alpha/beta chains family. F-type ATPases have 2 components, CF(1) - the catalytic core - and CF(0) - the membrane proton channel. CF(1) has five subunits: alpha(3), beta(3), gamma(1), delta(1), epsilon(1). CF(0) has three main subunits: a(1), b(2) and c(9-12). The alpha and beta chains form an alternating ring which encloses part of the gamma chain. CF(1) is attached to CF(0) by a central stalk formed by the gamma and epsilon chains, while a peripheral stalk is formed by the delta and b chains.

The protein localises to the cell inner membrane. It carries out the reaction ATP + H2O + 4 H(+)(in) = ADP + phosphate + 5 H(+)(out). Functionally, produces ATP from ADP in the presence of a proton gradient across the membrane. The catalytic sites are hosted primarily by the beta subunits. The sequence is that of ATP synthase subunit beta from Fervidobacterium nodosum (strain ATCC 35602 / DSM 5306 / Rt17-B1).